The sequence spans 383 residues: N-acetyldiaminopimelate deacetylase (383 aa).

The active site involves aspartate 75. The active-site Proton acceptor is the glutamate 134.

It belongs to the peptidase M20A family. N-acetyldiaminopimelate deacetylase subfamily.

The enzyme catalyses N-acetyl-(2S,6S)-2,6-diaminopimelate + H2O = (2S,6S)-2,6-diaminopimelate + acetate. Its pathway is amino-acid biosynthesis; L-lysine biosynthesis via DAP pathway; LL-2,6-diaminopimelate from (S)-tetrahydrodipicolinate (acetylase route): step 3/3. In terms of biological role, catalyzes the conversion of N-acetyl-diaminopimelate to diaminopimelate and acetate. This Lactobacillus acidophilus (strain ATCC 700396 / NCK56 / N2 / NCFM) protein is N-acetyldiaminopimelate deacetylase.